Consider the following 75-residue polypeptide: Brevinin-2ISc (75 aa).

Positions 1 to 22 are cleaved as a signal peptide; that stretch reads MFTLKKSLLLLFFLGTISLSLC. Positions 23-40 are cleaved as a propeptide — removed in mature form; that stretch reads EEERDADEDEGEMTEEEV. Cysteine 69 and cysteine 75 are joined by a disulfide.

In terms of tissue distribution, expressed by the skin glands.

The protein resides in the secreted. Has antimicrobial activity against Gram-negative bacterium E.coli ATCC 8739 (MIC=50 ug) and against Gram positive bacteria S.aureus ATCC 6538 (MIC=25 ug). Has no activity against methicillin-resistant S.aureus ATCC 43300, B.subtilis ATCC 6633 and against fungus C.albicans ATCC 90028. This is Brevinin-2ISc from Odorrana ishikawae (Ishikawa's frog).